We begin with the raw amino-acid sequence, 164 residues long: uncharacterized protein (164 aa).

Positions 1–29 (MLCVRSSSSNLESDTYLSRYSTRASAGTG) are enriched in polar residues. The tract at residues 1–62 (MLCVRSSSSN…SKPSNNKNID (62 aa)) is disordered. Positions 43–62 (SSDSSSSSSESKPSNNKNID) are enriched in low complexity.

This is an uncharacterized protein from Schizosaccharomyces pombe (strain 972 / ATCC 24843) (Fission yeast).